Consider the following 1372-residue polypeptide: DNA-directed RNA polymerase subunit beta' (1372 aa).

Zn(2+) contacts are provided by Cys-69, Cys-71, Cys-84, and Cys-87. 3 residues coordinate Mg(2+): Asp-460, Asp-462, and Asp-464. The Zn(2+) site is built by Cys-808, Cys-882, Cys-889, and Cys-892.

Belongs to the RNA polymerase beta' chain family. The RNAP catalytic core consists of 2 alpha, 1 beta, 1 beta' and 1 omega subunit. When a sigma factor is associated with the core the holoenzyme is formed, which can initiate transcription. Mg(2+) serves as cofactor. The cofactor is Zn(2+).

The enzyme catalyses RNA(n) + a ribonucleoside 5'-triphosphate = RNA(n+1) + diphosphate. Its function is as follows. DNA-dependent RNA polymerase catalyzes the transcription of DNA into RNA using the four ribonucleoside triphosphates as substrates. This Rickettsia rickettsii (strain Iowa) protein is DNA-directed RNA polymerase subunit beta'.